The sequence spans 235 residues: Large ribosomal subunit protein uL1 (235 aa).

Belongs to the universal ribosomal protein uL1 family. In terms of assembly, part of the 50S ribosomal subunit.

In terms of biological role, binds directly to 23S rRNA. The L1 stalk is quite mobile in the ribosome, and is involved in E site tRNA release. Functionally, protein L1 is also a translational repressor protein, it controls the translation of the L11 operon by binding to its mRNA. The polypeptide is Large ribosomal subunit protein uL1 (Prochlorococcus marinus (strain MIT 9313)).